The chain runs to 207 residues: Uracil phosphoribosyltransferase (207 aa).

5-phospho-alpha-D-ribose 1-diphosphate-binding positions include arginine 77, arginine 102, and 129 to 137; that span reads DPMLATGGS. Uracil is bound by residues isoleucine 192 and 197 to 199; that span reads GDA. Aspartate 198 contacts 5-phospho-alpha-D-ribose 1-diphosphate.

Belongs to the UPRTase family. Mg(2+) serves as cofactor.

It carries out the reaction UMP + diphosphate = 5-phospho-alpha-D-ribose 1-diphosphate + uracil. It participates in pyrimidine metabolism; UMP biosynthesis via salvage pathway; UMP from uracil: step 1/1. With respect to regulation, allosterically activated by GTP. Catalyzes the conversion of uracil and 5-phospho-alpha-D-ribose 1-diphosphate (PRPP) to UMP and diphosphate. The protein is Uracil phosphoribosyltransferase of Dictyoglomus turgidum (strain DSM 6724 / Z-1310).